Here is a 65-residue protein sequence, read N- to C-terminus: Bacteriocin amylovorin-L (65 aa).

Positions 1–15 (MKQLNSEQLQNIIGG) are excised as a propeptide. Residues 39–59 (LGGVWGAVIGGVGGAAVCGLA) traverse the membrane as a helical segment.

Active lactobin is composed of two different peptides, one which is lactobin A.

The protein localises to the secreted. It is found in the host cell membrane. This heat stable bacteriocin inhibits the growth of closely related Lactobacillus species. It may act as a pore-forming protein, creating a channel in the cell membrane. It kills Lactobacillus helveticus ATCC 15009, but displays no activity towards Listeria species. The polypeptide is Bacteriocin amylovorin-L (amyL) (Lactobacillus amylovorus).